Reading from the N-terminus, the 856-residue chain is Nuclear valosin-containing protein-like (856 aa).

Positions 1-220 (MKPRPAGFVD…SLLESDMKRK (220 aa)) are interaction with RPL5. Positions 49–52 (RRKR) match the Nucleolar localization signal motif. An N6-acetyllysine modification is found at Lys-70. Residues 84-175 (AKRARQGEED…AKDSEGGWFI (92 aa)) form a disordered region. The Nuclear localization signal signature appears at 85-88 (KRAR). A compositionally biased stretch (acidic residues) spans 92-111 (EDNEYTESYSDDDSSMEDYP). Composition is skewed to polar residues over residues 114-124 (QSANHMNSSLL) and 133-158 (DSVSNTPEMEQRETTSSTPRISSKTG). A Phosphoserine modification is found at Ser-134. Thr-138 bears the Phosphothreonine mark. Residue Lys-156 is modified to N6-acetyllysine. Ser-191 is subject to Phosphoserine. The interval 197–236 (PKKPITEIQDSKDSSLLESDMKRKGKLKNKGSKRKKEDLQ) is disordered. Residues 205–218 (QDSKDSSLLESDMK) show a composition bias toward basic and acidic residues. Residue Lys-208 forms a Glycyl lysine isopeptide (Lys-Gly) (interchain with G-Cter in SUMO2) linkage. A phosphoserine mark is found at Ser-211 and Ser-215. Residues 218 to 232 (KRKGKLKNKGSKRKK) carry the Nuclear localization signal motif. Residues 219–230 (RKGKLKNKGSKR) show a composition bias toward basic residues. The interaction with WDR74 stretch occupies residues 267 to 474 (VGGNDMTLKE…LTPGFVGADL (208 aa)). 305–312 (GPPGCGKT) provides a ligand contact to ATP. The interval 496-523 (QQKKNPEMEDLPSKGVQEERLGTEPTSE) is disordered. 622-629 (GPPGCGKT) contributes to the ATP binding site.

Belongs to the AAA ATPase family. As to quaternary structure, interacts with NCL/nucleolin. Isoform 1 and isoform 2 interact with TERT and isoform 1 exhibits a higher binding affinity for TERT compared to isoform 2. Isoform 1 interacts with MTREX in an ATP-dependent manner; the interaction is required to associate NVL with nuclear RNA exosome. Isoform 1 interacts with RPL5 in an ATP-dependent manner. Interacts with WDR74 (through WDR repeats); the interaction is independent of RNA or pre-60S ribosome particles. Widely expressed. Highest level of expression in heart, placenta, skeletal muscle, pancreas and retina.

The protein localises to the nucleus. The protein resides in the nucleoplasm. It is found in the nucleolus. Participates in the assembly of the telomerase holoenzyme and effecting of telomerase activity via its interaction with TERT. Involved in both early and late stages of the pre-rRNA processing pathways. Spatiotemporally regulates 60S ribosomal subunit biogenesis in the nucleolus. Catalyzes the release of specific assembly factors, such as WDR74, from pre-60S ribosomal particles through the ATPase activity. The protein is Nuclear valosin-containing protein-like of Homo sapiens (Human).